The chain runs to 281 residues: Acetyl-coenzyme A carboxylase carboxyl transferase subunit beta (281 aa).

The tract at residues 1–23 (MAWFKREKKGISTSTEEKKEAPD) is disordered. One can recognise a CoA carboxyltransferase N-terminal domain in the interval 25-281 (LWNKCPNCKK…LAAFLKMMKN (257 aa)). The Zn(2+) site is built by Cys29, Cys32, Cys48, and Cys51. Residues 29 to 51 (CPNCKKALHSADLLENKYVCQYC) form a C4-type zinc finger.

It belongs to the AccD/PCCB family. In terms of assembly, acetyl-CoA carboxylase is a heterohexamer composed of biotin carboxyl carrier protein (AccB), biotin carboxylase (AccC) and two subunits each of ACCase subunit alpha (AccA) and ACCase subunit beta (AccD). The cofactor is Zn(2+).

It localises to the cytoplasm. The catalysed reaction is N(6)-carboxybiotinyl-L-lysyl-[protein] + acetyl-CoA = N(6)-biotinyl-L-lysyl-[protein] + malonyl-CoA. It participates in lipid metabolism; malonyl-CoA biosynthesis; malonyl-CoA from acetyl-CoA: step 1/1. Functionally, component of the acetyl coenzyme A carboxylase (ACC) complex. Biotin carboxylase (BC) catalyzes the carboxylation of biotin on its carrier protein (BCCP) and then the CO(2) group is transferred by the transcarboxylase to acetyl-CoA to form malonyl-CoA. The sequence is that of Acetyl-coenzyme A carboxylase carboxyl transferase subunit beta from Pedobacter heparinus (strain ATCC 13125 / DSM 2366 / CIP 104194 / JCM 7457 / NBRC 12017 / NCIMB 9290 / NRRL B-14731 / HIM 762-3).